The sequence spans 90 residues: Actobindin-B/C (90 aa).

WH2 domains are found at residues 4–21 (TANP…LKHA) and 40–57 (DHSS…LKHV). The tract at residues 57–90 (VETQDRSAPVTEGATVKSNNHSALLGEIKSKAQE) is disordered.

As to quaternary structure, monomer.

In terms of biological role, is able to bind two actin monomers at high concentrations of G-actin. Inhibits actin polymerization by sequestering G-actin and stabilizing actin dimers. This is Actobindin-B/C (abnB) from Dictyostelium discoideum (Social amoeba).